Reading from the N-terminus, the 312-residue chain is Fasciclin-like arabinogalactan protein elcF (312 aa).

Residues 1-16 (MKLFTLLLPALTSAHS) form the signal peptide. FAS1 domains lie at 17–160 (LSTL…NASM) and 162–289 (LPHN…DKVL). N-linked (GlcNAc...) asparagine glycosylation is found at Asn-48, Asn-68, Asn-113, Asn-157, and Asn-165.

Belongs to the fasciclin-like AGP family.

It participates in secondary metabolite biosynthesis. In terms of biological role, fasciclin-like arabinogalactan protein; part of the gene cluster that mediates the biosynthesis of elsinochrome C, a perelyenequinone phytotoxin structurally similar to cercosporin. The first step of elsinochrome C biosynthesis is performed by the polyketide synthase elcA which catalyzes the formation of nor-toralactone. The starter unit acyltransferase (SAT) domain of elcA initiates polyketide extension by the selective utilization of acetyl-CoA, which is elongated to the heptaketide in the beta-ketoacyl synthase (KS) domain by successive condensations with six malonyl units introduced by the malonyl acyltransferase (MAT) domain. The product template (PT) domain catalyzes C4-C9 and C2-C11 aldol cyclizations and dehydrations to a trihydroxynaphthalene, which is thought to be delivered to the thioesterase (TE) domain for product release. The bifunctional enzyme elcB then methylates nor-toralactone to toralactone before conducting an unusual oxidative aromatic ring opening. The next step in perylenequinone biosynthesis is an O-methylation at the nascent OH-6 of the elcB product performed by the O-methyltransferase elcD. The oxidative coupling of the two monomeric naphthol units in perylenequinone biosynthesis is catalyzed by the FAD-dependent monooxygenase elcE and the multicopper oxidase elcG. ElcG might catalyze the first intermolecular coupling in a regio- and stereo-selective manner via a phenol radical coupling mechanism and the elcE could forge the second C-C bond intramolecularly via a hydride transfer mechanism. The fasciclin domain-containing protein elcF might also play a role duting this step. The last piece of the puzzle in the biosynthesis of elsinochrome C is the additional annulation by enolate coupling to afford the dihydrobenzo(ghi)perylenequinone system, catalyzed by the FAD-dependent monooxygenase elcH. This Phaeosphaeria nodorum (strain SN15 / ATCC MYA-4574 / FGSC 10173) (Glume blotch fungus) protein is Fasciclin-like arabinogalactan protein elcF.